The sequence spans 279 residues: Nucleotide-binding protein THA_1518 (279 aa).

9–16 (GLSGAGKS) contributes to the ATP binding site. GTP is bound at residue 57–60 (DARS).

Belongs to the RapZ-like family.

Functionally, displays ATPase and GTPase activities. In Thermosipho africanus (strain TCF52B), this protein is Nucleotide-binding protein THA_1518.